A 460-amino-acid polypeptide reads, in one-letter code: Argininosuccinate lyase (460 aa).

This sequence belongs to the lyase 1 family. Argininosuccinate lyase subfamily.

The protein resides in the cytoplasm. The enzyme catalyses 2-(N(omega)-L-arginino)succinate = fumarate + L-arginine. It functions in the pathway amino-acid biosynthesis; L-arginine biosynthesis; L-arginine from L-ornithine and carbamoyl phosphate: step 3/3. The chain is Argininosuccinate lyase from Actinobacillus succinogenes (strain ATCC 55618 / DSM 22257 / CCUG 43843 / 130Z).